Consider the following 408-residue polypeptide: Neutral cholesterol ester hydrolase 1 (408 aa).

The Cytoplasmic segment spans residues 1 to 4 (MRSS). A helical; Signal-anchor for type II membrane protein membrane pass occupies residues 5–25 (CVLLTALVALAAYYVYIPLPG). At 26 to 408 (SVSDPWKLML…SYIKWLDQNL (383 aa)) the chain is on the lumenal side. Positions 113–115 (HGG) match the Involved in the stabilization of the negatively charged intermediate by the formation of the oxyanion hole motif. Ser-191 is a catalytic residue. Residues Asn-270 and Asn-287 are each glycosylated (N-linked (GlcNAc...) asparagine). Active-site residues include Asp-348 and His-378. Asn-389 carries an N-linked (GlcNAc...) asparagine glycan.

It belongs to the 'GDXG' lipolytic enzyme family. Post-translationally, N-glycosylated.

Its subcellular location is the cell membrane. The protein resides in the microsome. The catalysed reaction is a 1-O-alkyl-2-acetyl-sn-glycerol + H2O = a 1-O-alkyl-sn-glycerol + acetate + H(+). It catalyses the reaction 1-O-hexadecyl-2-acetyl-sn-glycerol + H2O = 1-O-hexadecyl-sn-glycerol + acetate + H(+). It carries out the reaction a cholesterol ester + H2O = cholesterol + a fatty acid + H(+). The enzyme catalyses cholesteryl (9Z-octadecenoate) + H2O = cholesterol + (9Z)-octadecenoate + H(+). In terms of biological role, hydrolyzes 2-acetyl monoalkylglycerol ether (1-O-alkyl-2-acetyl-sn-glycerol), the penultimate precursor of the pathway for de novo synthesis of platelet-activating factor. May be responsible for the hydrolysis of cholesterol esters (such as cholesteryl (9Z-octadecenoate)) in macrophages. Also involved in organ detoxification by hydrolyzing exogenous organophosphorus compounds. The sequence is that of Neutral cholesterol ester hydrolase 1 (NCEH1) from Pongo abelii (Sumatran orangutan).